Reading from the N-terminus, the 400-residue chain is Formate-dependent phosphoribosylglycinamide formyltransferase (400 aa).

N(1)-(5-phospho-beta-D-ribosyl)glycinamide is bound by residues 22–23 and Glu-82; that span reads EL. ATP-binding positions include Arg-115, Lys-157, 162–167, 197–200, and Glu-205; these read SSGKGQ and EGFV. The ATP-grasp domain occupies 120–315; sequence RLAAETLGLP…EFELHARAIL (196 aa). Residues Glu-274 and Glu-286 each coordinate Mg(2+). N(1)-(5-phospho-beta-D-ribosyl)glycinamide is bound by residues Asp-293, Lys-362, and 369–370; that span reads RR.

It belongs to the PurK/PurT family. Homodimer.

It catalyses the reaction N(1)-(5-phospho-beta-D-ribosyl)glycinamide + formate + ATP = N(2)-formyl-N(1)-(5-phospho-beta-D-ribosyl)glycinamide + ADP + phosphate + H(+). It participates in purine metabolism; IMP biosynthesis via de novo pathway; N(2)-formyl-N(1)-(5-phospho-D-ribosyl)glycinamide from N(1)-(5-phospho-D-ribosyl)glycinamide (formate route): step 1/1. Involved in the de novo purine biosynthesis. Catalyzes the transfer of formate to 5-phospho-ribosyl-glycinamide (GAR), producing 5-phospho-ribosyl-N-formylglycinamide (FGAR). Formate is provided by PurU via hydrolysis of 10-formyl-tetrahydrofolate. In Mycolicibacterium vanbaalenii (strain DSM 7251 / JCM 13017 / BCRC 16820 / KCTC 9966 / NRRL B-24157 / PYR-1) (Mycobacterium vanbaalenii), this protein is Formate-dependent phosphoribosylglycinamide formyltransferase.